Consider the following 241-residue polypeptide: Zinc finger CCHC domain-containing protein 24 (241 aa).

Residues Ser65 and Ser93 each carry the phosphoserine modification. Residues 132–149 (YLCHLCFNKGHYIKDCPQ) form a CCHC-type zinc finger.

The chain is Zinc finger CCHC domain-containing protein 24 from Mus musculus (Mouse).